Reading from the N-terminus, the 339-residue chain is Annexin A2 (339 aa).

The residue at position 2 (S2) is an N-acetylserine. The interval 2–24 (STVHEILCKLSLEGDHSTPPSAY) is S100A10-binding site. Position 24 is a phosphotyrosine; by SRC (Y24). S26 is modified (phosphoserine; by PKC). 2 Annexin repeats span residues 33–104 (FDAE…GLLK) and 105–176 (TPAQ…ALAK). K49 bears the N6-acetyllysine; alternate mark. K49 is covalently cross-linked (Glycyl lysine isopeptide (Lys-Gly) (interchain with G-Cter in SUMO1); alternate). Residue K49 forms a Glycyl lysine isopeptide (Lys-Gly) (interchain with G-Cter in SUMO2); alternate linkage. Residue K152 is modified to N6-acetyllysine. S184 is modified (phosphoserine). Annexin repeat units follow at residues 189 to 261 (ELID…NLVQ) and 265 to 336 (NKPL…YLCG). Y199 bears the Phosphotyrosine mark. K227 carries the N6-acetyllysine modification.

This sequence belongs to the annexin family. In terms of assembly, heterotetramer containing 2 light chains of S100A10/p11 and 2 heavy chains of ANXA2/p36. Interacts with ATP1B1. Interacts with DYSF. Interacts with COCH. Interacts (via repeat Annexin 1) with PCSK9 (via the C-terminal domain); the interaction inhibits the degradation of LDLR. Interacts with CEACAM1 (via the cytoplasmic domain); this interaction is regulated by phosphorylation of CEACAM1. Interacts with APPL2 and APPL1; targets APPL2 to endosomes and acting in parallel to RAB5A. Interacts with S100A4. May interact with UBAP2. Interacts with PLEKHG4B; this interaction is required for PLEKHG4B localization to cell-cell adhesions. Interacts with FAM13A. Interacts with salivary cystatin-L2 (via loop 2) from the tick Ixodes scapularis; the interaction results in reduced activation of mouse NLRC4 inflammasome formation upon Anaplasma phagocytophilum infection. ISGylated.

The protein localises to the secreted. Its subcellular location is the extracellular space. It is found in the extracellular matrix. It localises to the basement membrane. The protein resides in the melanosome. The protein localises to the early endosome. In terms of biological role, calcium-regulated membrane-binding protein whose affinity for calcium is greatly enhanced by anionic phospholipids. It binds two calcium ions with high affinity. May be involved in heat-stress response. Inhibits PCSK9-enhanced LDLR degradation, probably reduces PCSK9 protein levels via a translational mechanism but also competes with LDLR for binding with PCSK9. Binds to endosomes damaged by phagocytosis of particulate wear debris and participates in endosomal membrane stabilization, thereby limiting NLRP3 inflammasome activation. Required for endothelial cell surface plasmin generation and may support fibrinolytic surveillance and neoangiogenesis. Functionally, (Microbial infection) Regulates the formation of the NLRC4 inflammasome triggered by Anaplasma phagocytophilum infection. Its function is as follows. (Microbial infection) Protects against Klebsiella pneumoniae infection. Attenuates bacteria-induced pulmonary inflammation and promotes intro-abdominal pathogen clearance. Promotes anti-inflammatory responses by facilitating TLR4 internalization and translocation into early endosomal membranes; this leads to activation of TRAM-dependent endosomal signaling and release of anti-inflammatory cytokines. (Microbial infection) Promotes macrophage phagocytic efficiency towards Cryptococcus neoformans and ability to control fungal infection inside the cells. In terms of biological role, (Microbial infection) Contributes to protection against Pseudomonas aeruginosa infection by regulating autophagy via the AKT1-mTOR-ULK1/2 signaling pathway and activation of Rho GTPases via FAM13A-mediated mechanism. In Mus musculus (Mouse), this protein is Annexin A2 (Anxa2).